Here is a 1413-residue protein sequence, read N- to C-terminus: MGSSFRSSSSRNEHEDGGDEAEHALQWAEIQRLPTFKRLRSSLVDKYGEGTEKGKKVVDVTKLGAMERHLMIEKLIKHIENDNLKLLKKIRRRMERVGVEFPSIEVRYEHLGVEAACEVVEGKALPTLWNSLKHVFLDLLKLSGVRTNEANIKILTDVSGIISPGRLTLLLGPPGCGKTTLLKALSGNLENNLKCYGEISYNGHGLNEVVPQKTSAYISQHDLHIAEMTTRETIDFSARCQGVGSRTDIMMEVSKREKDGGIIPDPEIDAYMKAISVKGLKRSLQTDYILKILGLDICAETLVGNAMKRGISGGQKKRLTTAEMIVGPTKALFMDEITNGLDSSTAFQIIKSLQQVAHITNATVFVSLLQPAPESYDLFDDIVLMAEGKIVYHGPRDDVLKFFEECGFQCPERKGVADFLQEVISKKDQGQYWLHQNLPHSFVSVDTLSKRFKDLEIGRKIEEALSKPYDISKTHKDALSFNVYSLPKWELFRACISREFLLMKRNYFVYLFKTFQLVLAAIITMTVFIRTRMDIDIIHGNSYMSCLFFATVVLLVDGIPELSMTVQRLSVFYKQKQLCFYPAWAYAIPATVLKIPLSFFESLVWTCLTYYVIGYTPEPYRFFRQFMILFAVHFTSISMFRCIAAIFQTGVAAMTAGSFVMLITFVFAGFAIPYTDMPGWLKWGFWVNPISYAEIGLSVNEFLAPRWQKMQPTNVTLGRTILESRGLNYDDYMYWVSLSALLGLTIIFNTIFTLALSFLKSPTSSRPMISQDKLSELQGTKDSSVKKNKPLDSSIKTNEDPGKMILPFKPLTITFQDLNYYVDVPVEMKGQGYNEKKLQLLSEITGAFRPGVLTALMGISGAGKTTLLDVLAGRKTSGYIEGEIRISGFLKVQETFARVSGYCEQTDIHSPSITVEESLIYSAWLRLVPEINPQTKIRFVKQVLETIELEEIKDALVGVAGVSGLSTEQRKRLTVAVELVANPSIIFMDEPTTGLDARAAAIVMRAVKNVAETGRTIVCTIHQPSIHIFEAFDELVLLKRGGRMIYSGPLGQHSSCVIEYFQNIPGVAKIRDKYNPATWMLEVTSESVETELDMDFAKIYNESDLYKNNSELVKELSKPDHGSSDLHFKRTFAQNWWEQFKSCLWKMSLSYWRSPSYNLMRIGHTFISSFIFGLLFWNQGKKIDTQQNLFTVLGAIYGLVLFVGINNCTSALQYFETERNVMYRERFAGMYSAFAYALAQVVTEIPYIFIQSAEFVIVIYPMIGFYASFSKVFWSLYAMFCNLLCFNYLAMFLISITPNFMVAAILQSLFFTTFNIFAGFLIPKPQIPKWWVWFYYITPTSWTLNLFFSSQYGDIHQKINAFGETKTVASFLEDYFGFHHDRLMITAIILIAFPIALATMYAFFVAKLNFQKR.

Low complexity predominate over residues 1–10; that stretch reads MGSSFRSSSS. The segment at 1-21 is disordered; it reads MGSSFRSSSSRNEHEDGGDEA. Residues 11–21 are compositionally biased toward basic and acidic residues; that stretch reads RNEHEDGGDEA. The ABC transporter 1 domain maps to 140–412; the sequence is LKLSGVRTNE…FEECGFQCPE (273 aa). 172-179 provides a ligand contact to ATP; it reads GPPGCGKT. In terms of domain architecture, ABC transmembrane type-2 1 spans 490 to 702; that stretch reads ELFRACISRE…AEIGLSVNEF (213 aa). 6 consecutive transmembrane segments (helical) span residues 509–529, 546–566, 580–600, 626–646, 652–672, and 738–758; these read VYLF…TVFI, CLFF…SMTV, FYPA…LSFF, FMIL…IAAI, AAMT…GFAI, and LSAL…ALSF. The ABC transporter 2 domain maps to 813-1065; the sequence is ITFQDLNYYV…CVIEYFQNIP (253 aa). 858 to 865 is a binding site for ATP; that stretch reads GISGAGKT. An ABC transmembrane type-2 2 domain is found at 1138–1352; sequence EQFKSCLWKM…TLNLFFSSQY (215 aa). 7 helical membrane passes run 1157–1177, 1189–1209, 1245–1265, 1276–1296, 1302–1322, 1330–1350, and 1385–1405; these read YNLM…LLFW, LFTV…NNCT, IPYI…MIGF, LYAM…LISI, VAAI…GFLI, WWVW…FFSS, and ITAI…AFFV.

This sequence belongs to the ABC transporter superfamily. ABCG family. PDR (TC 3.A.1.205) subfamily. In terms of tissue distribution, expressed in roots and stems.

Its subcellular location is the membrane. In terms of biological role, may be a general defense protein. The chain is ABC transporter G family member 33 (ABCG33) from Arabidopsis thaliana (Mouse-ear cress).